An 81-amino-acid polypeptide reads, in one-letter code: ATP synthase subunit c (81 aa).

Helical transmembrane passes span 7-27 (AASV…PGIG) and 57-77 (LAFM…LLFA).

This sequence belongs to the ATPase C chain family. As to quaternary structure, F-type ATPases have 2 components, F(1) - the catalytic core - and F(0) - the membrane proton channel. F(1) has five subunits: alpha(3), beta(3), gamma(1), delta(1), epsilon(1). F(0) has four main subunits: a(1), b(1), b'(1) and c(10-14). The alpha and beta chains form an alternating ring which encloses part of the gamma chain. F(1) is attached to F(0) by a central stalk formed by the gamma and epsilon chains, while a peripheral stalk is formed by the delta, b and b' chains.

It localises to the cellular thylakoid membrane. Functionally, f(1)F(0) ATP synthase produces ATP from ADP in the presence of a proton or sodium gradient. F-type ATPases consist of two structural domains, F(1) containing the extramembraneous catalytic core and F(0) containing the membrane proton channel, linked together by a central stalk and a peripheral stalk. During catalysis, ATP synthesis in the catalytic domain of F(1) is coupled via a rotary mechanism of the central stalk subunits to proton translocation. Key component of the F(0) channel; it plays a direct role in translocation across the membrane. A homomeric c-ring of between 10-14 subunits forms the central stalk rotor element with the F(1) delta and epsilon subunits. The chain is ATP synthase subunit c from Synechococcus elongatus (strain ATCC 33912 / PCC 7942 / FACHB-805) (Anacystis nidulans R2).